Reading from the N-terminus, the 874-residue chain is Alanine--tRNA ligase (874 aa).

Zn(2+) is bound by residues His562, His566, Cys665, and His669.

This sequence belongs to the class-II aminoacyl-tRNA synthetase family. Zn(2+) serves as cofactor.

It is found in the cytoplasm. The catalysed reaction is tRNA(Ala) + L-alanine + ATP = L-alanyl-tRNA(Ala) + AMP + diphosphate. Its function is as follows. Catalyzes the attachment of alanine to tRNA(Ala) in a two-step reaction: alanine is first activated by ATP to form Ala-AMP and then transferred to the acceptor end of tRNA(Ala). Also edits incorrectly charged Ser-tRNA(Ala) and Gly-tRNA(Ala) via its editing domain. This chain is Alanine--tRNA ligase, found in Pseudomonas aeruginosa (strain ATCC 15692 / DSM 22644 / CIP 104116 / JCM 14847 / LMG 12228 / 1C / PRS 101 / PAO1).